Consider the following 318-residue polypeptide: Forkhead box protein I2 (318 aa).

The disordered stretch occupies residues M1–G30. The segment at residues R102–K196 is a DNA-binding region (fork-head).

It is found in the nucleus. In terms of biological role, possible transcriptional activator. This chain is Forkhead box protein I2 (FOXI2), found in Homo sapiens (Human).